Consider the following 202-residue polypeptide: MSYLGVGVSPGNVPVYHGSNLKVIDKRVRLAELVLRCLICGLGVLAAVLVGTDTQVKEIFSIQKKARFTDMKALVFLVIANGIAAAYSLLQGVRCVVGMVRGSALFSKPLAWAIFSGDQMMAYLTVAAVAAAAQSAVFAKLGQPELQWMKICNMYGKFCNQVGEGIASALLVSVSMVVLSCISAFSLFRLYGANKGKDCTRW.

The Cytoplasmic portion of the chain corresponds to 1–29; it reads MSYLGVGVSPGNVPVYHGSNLKVIDKRVR. The chain crosses the membrane as a helical span at residues 30 to 50; sequence LAELVLRCLICGLGVLAAVLV. Topologically, residues 51–72 are extracellular; the sequence is GTDTQVKEIFSIQKKARFTDMK. The helical transmembrane segment at 73-93 threads the bilayer; it reads ALVFLVIANGIAAAYSLLQGV. Over 94–109 the chain is Cytoplasmic; it reads RCVVGMVRGSALFSKP. A helical membrane pass occupies residues 110-130; the sequence is LAWAIFSGDQMMAYLTVAAVA. Over 131-164 the chain is Extracellular; the sequence is AAAQSAVFAKLGQPELQWMKICNMYGKFCNQVGE. A helical transmembrane segment spans residues 165 to 185; it reads GIASALLVSVSMVVLSCISAF. At 186-202 the chain is on the cytoplasmic side; that stretch reads SLFRLYGANKGKDCTRW.

This sequence belongs to the Casparian strip membrane proteins (CASP) family. As to quaternary structure, homodimer and heterodimers.

The protein localises to the cell membrane. The polypeptide is CASP-like protein 2B1 (Ricinus communis (Castor bean)).